A 247-amino-acid polypeptide reads, in one-letter code: Adenosylcobinamide-GDP ribazoletransferase (247 aa).

Helical transmembrane passes span 34-54, 59-79, 113-133, 138-158, 171-193, and 197-219; these read IVMF…IFIL, CGIP…TGGF, GGLA…ELAL, MLAA…LLMY, VFIG…IIAT, and PGMQ…GQLL.

Belongs to the CobS family. The cofactor is Mg(2+).

It localises to the cell inner membrane. It carries out the reaction alpha-ribazole + adenosylcob(III)inamide-GDP = adenosylcob(III)alamin + GMP + H(+). It catalyses the reaction alpha-ribazole 5'-phosphate + adenosylcob(III)inamide-GDP = adenosylcob(III)alamin 5'-phosphate + GMP + H(+). The protein operates within cofactor biosynthesis; adenosylcobalamin biosynthesis; adenosylcobalamin from cob(II)yrinate a,c-diamide: step 7/7. Its function is as follows. Joins adenosylcobinamide-GDP and alpha-ribazole to generate adenosylcobalamin (Ado-cobalamin). Also synthesizes adenosylcobalamin 5'-phosphate from adenosylcobinamide-GDP and alpha-ribazole 5'-phosphate. In Salmonella newport (strain SL254), this protein is Adenosylcobinamide-GDP ribazoletransferase.